The primary structure comprises 143 residues: MGRHYEIVLLVHPDQSEQVQAMLERYKALIENGHGKIHRLEDWGRRQLAYPIQKLVKAHYLMMNIEVEQSVLNELVDLFRFNDAILRHLAIKRSGPYTEQSFIMKSKDDKGDKPERRRRDDDESGDVGVSNDSDNDGGNAEAA.

The segment at glutamine 100–alanine 143 is disordered. A compositionally biased stretch (basic and acidic residues) spans lysine 105–aspartate 121. Residues aspartate 126–alanine 143 are compositionally biased toward low complexity.

The protein belongs to the bacterial ribosomal protein bS6 family.

Binds together with bS18 to 16S ribosomal RNA. The sequence is that of Small ribosomal subunit protein bS6 from Xylella fastidiosa (strain M12).